Here is a 245-residue protein sequence, read N- to C-terminus: tRNA1(Val) (adenine(37)-N6)-methyltransferase (245 aa).

This sequence belongs to the methyltransferase superfamily. tRNA (adenine-N(6)-)-methyltransferase family.

It localises to the cytoplasm. It catalyses the reaction adenosine(37) in tRNA1(Val) + S-adenosyl-L-methionine = N(6)-methyladenosine(37) in tRNA1(Val) + S-adenosyl-L-homocysteine + H(+). In terms of biological role, specifically methylates the adenine in position 37 of tRNA(1)(Val) (anticodon cmo5UAC). This chain is tRNA1(Val) (adenine(37)-N6)-methyltransferase, found in Cronobacter sakazakii (strain ATCC BAA-894) (Enterobacter sakazakii).